A 383-amino-acid chain; its full sequence is UDP-N-acetylenolpyruvoylglucosamine reductase (383 aa).

In terms of domain architecture, FAD-binding PCMH-type spans 42–212 (LSCQAMQLIT…TRVGFKLHKD (171 aa)). Residue Arg-189 is part of the active site. Ser-267 (proton donor) is an active-site residue. Glu-369 is an active-site residue.

This sequence belongs to the MurB family. Requires FAD as cofactor.

It localises to the cytoplasm. It carries out the reaction UDP-N-acetyl-alpha-D-muramate + NADP(+) = UDP-N-acetyl-3-O-(1-carboxyvinyl)-alpha-D-glucosamine + NADPH + H(+). The protein operates within cell wall biogenesis; peptidoglycan biosynthesis. Functionally, cell wall formation. This chain is UDP-N-acetylenolpyruvoylglucosamine reductase, found in Psychrobacter sp. (strain PRwf-1).